We begin with the raw amino-acid sequence, 486 residues long: Serine/threonine-protein phosphatase 2A 56 kDa regulatory subunit alpha isoform (486 aa).

An N-acetylserine modification is found at S2. Residues 22-52 form a disordered region; that stretch reads DGFTRKSVRKAQRQKRSQGSSQFRSQGSQAE. A compositionally biased stretch (basic residues) spans 27–37; it reads KSVRKAQRQKR. Low complexity predominate over residues 38–51; that stretch reads SQGSSQFRSQGSQA. 3 positions are modified to phosphoserine: S41, S42, and S49.

Belongs to the phosphatase 2A regulatory subunit B56 family. PP2A consists of a common heterodimeric core enzyme, composed of a 36 kDa catalytic subunit (subunit C) and a 65 kDa constant regulatory subunit (PR65 or subunit A), that associates with a variety of regulatory subunits. Proteins that associate with the core dimer include three families of regulatory subunits B (the R2/B/PR55/B55, R3/B''/PR72/PR130/PR59 and R5/B'/B56 families), the 48 kDa variable regulatory subunit, viral proteins, and cell signaling molecules. Interacts with SGO1. Widely expressed with highest levels in thymus and ovary.

It is found in the cytoplasm. It localises to the nucleus. The protein localises to the chromosome. The protein resides in the centromere. Its function is as follows. The B regulatory subunit might modulate substrate selectivity and catalytic activity, and might also direct the localization of the catalytic enzyme to a particular subcellular compartment. The chain is Serine/threonine-protein phosphatase 2A 56 kDa regulatory subunit alpha isoform (Ppp2r5a) from Mus musculus (Mouse).